A 616-amino-acid polypeptide reads, in one-letter code: UvrABC system protein C (616 aa).

In terms of domain architecture, GIY-YIG spans 21–100 (TCPGVYQFKN…IKDLKPRYNI (80 aa)). Residues 214 to 249 (GALIRTLSAEMHRYADELRFEEAAELKIQIEGLRKY) form the UVR domain.

This sequence belongs to the UvrC family. As to quaternary structure, interacts with UvrB in an incision complex.

Its subcellular location is the cytoplasm. In terms of biological role, the UvrABC repair system catalyzes the recognition and processing of DNA lesions. UvrC both incises the 5' and 3' sides of the lesion. The N-terminal half is responsible for the 3' incision and the C-terminal half is responsible for the 5' incision. This Prosthecochloris aestuarii (strain DSM 271 / SK 413) protein is UvrABC system protein C.